The chain runs to 251 residues: Fibroblast growth factor 23 (251 aa).

A signal peptide spans 1 to 24; the sequence is MLGTCLRLLVGVLCTVCSLGTARA. Residues Cys95 and Cys113 are joined by a disulfide bond. 2 O-linked (GalNAc) threonine glycosylation sites follow: Thr171 and Thr178. Residues 175 to 251 are disordered; it reads RRHTRSAEDP…DRCRPFPRFV (77 aa). The span at 179-189 shows a compositional bias: basic and acidic residues; the sequence is RSAEDPPERDP. The residue at position 180 (Ser180) is a Phosphoserine; by FAM20C.

The protein belongs to the heparin-binding growth factors family. Interacts with FGFR1. Interacts with FGFR2, FGFR3 and FGFR4. Affinity between fibroblast growth factors (FGFs) and their receptors is increased by KL and heparan sulfate glycosaminoglycans that function as coreceptors. Following secretion this protein is inactivated by cleavage into a N-terminal fragment and a C-terminal fragment. The processing is effected by proprotein convertases. Post-translationally, O-glycosylated at Thr-171 and Thr-178 by GALNT3 and glycosylation of Thr-178 requires previous glycosylation at Thr171. Glycosylation is necessary for secretion; it blocks processing by proprotein convertases when the O-glycan is alpha 2,6-sialylated. Competition between proprotein convertase cleavage and block of cleavage by O-glycosylation determines the level of secreted active FGF23. In terms of processing, phosphorylation at Ser-180 mediated by FAM20C slows down glycosylation at Thr-178 notably. As to expression, mainly expressed in the brain and thymus at low levels. In brain; preferentially expressed in the ventrolateral thalamic nucleus.

It localises to the secreted. Regulator of phosphate homeostasis. Inhibits renal tubular phosphate transport by reducing SLC34A1 levels. Acts directly on the parathyroid to decrease PTH secretion. Regulator of vitamin-D metabolism. Negatively regulates osteoblasts differentiation and matrix mineralization. Up-regulates EGR1 expression in the presence of KL. This chain is Fibroblast growth factor 23 (Fgf23), found in Mus musculus (Mouse).